A 301-amino-acid polypeptide reads, in one-letter code: UDP-3-O-acyl-N-acetylglucosamine deacetylase (301 aa).

The Zn(2+) site is built by H81, H237, and D241. The active-site Proton donor is the H264.

The protein belongs to the LpxC family. Zn(2+) serves as cofactor.

The enzyme catalyses a UDP-3-O-[(3R)-3-hydroxyacyl]-N-acetyl-alpha-D-glucosamine + H2O = a UDP-3-O-[(3R)-3-hydroxyacyl]-alpha-D-glucosamine + acetate. It participates in glycolipid biosynthesis; lipid IV(A) biosynthesis; lipid IV(A) from (3R)-3-hydroxytetradecanoyl-[acyl-carrier-protein] and UDP-N-acetyl-alpha-D-glucosamine: step 2/6. Catalyzes the hydrolysis of UDP-3-O-myristoyl-N-acetylglucosamine to form UDP-3-O-myristoylglucosamine and acetate, the committed step in lipid A biosynthesis. This is UDP-3-O-acyl-N-acetylglucosamine deacetylase from Leptospira interrogans serogroup Icterohaemorrhagiae serovar copenhageni (strain Fiocruz L1-130).